The chain runs to 213 residues: Thiopurine S-methyltransferase (213 aa).

Residues Trp10, Leu45, Glu66, and Arg121 each contribute to the S-adenosyl-L-methionine site.

It belongs to the class I-like SAM-binding methyltransferase superfamily. TPMT family.

It is found in the cytoplasm. The enzyme catalyses S-adenosyl-L-methionine + a thiopurine = S-adenosyl-L-homocysteine + a thiopurine S-methylether.. This Aliivibrio fischeri (strain MJ11) (Vibrio fischeri) protein is Thiopurine S-methyltransferase.